A 199-amino-acid polypeptide reads, in one-letter code: Adenylyl-sulfate kinase (199 aa).

An ATP-binding site is contributed by 31-38 (GLSGSGKS). The active-site Phosphoserine intermediate is the S105.

Belongs to the APS kinase family.

It catalyses the reaction adenosine 5'-phosphosulfate + ATP = 3'-phosphoadenylyl sulfate + ADP + H(+). It participates in sulfur metabolism; hydrogen sulfide biosynthesis; sulfite from sulfate: step 2/3. Functionally, catalyzes the synthesis of activated sulfate. This chain is Adenylyl-sulfate kinase, found in Marinobacter nauticus (strain ATCC 700491 / DSM 11845 / VT8) (Marinobacter aquaeolei).